The sequence spans 492 residues: Bifunctional purine biosynthesis protein PurH (492 aa).

The MGS-like domain occupies 1-144 (MKKAILSVSN…KNYKHVTTIV (144 aa)).

Belongs to the PurH family.

The enzyme catalyses (6R)-10-formyltetrahydrofolate + 5-amino-1-(5-phospho-beta-D-ribosyl)imidazole-4-carboxamide = 5-formamido-1-(5-phospho-D-ribosyl)imidazole-4-carboxamide + (6S)-5,6,7,8-tetrahydrofolate. It catalyses the reaction IMP + H2O = 5-formamido-1-(5-phospho-D-ribosyl)imidazole-4-carboxamide. It functions in the pathway purine metabolism; IMP biosynthesis via de novo pathway; 5-formamido-1-(5-phospho-D-ribosyl)imidazole-4-carboxamide from 5-amino-1-(5-phospho-D-ribosyl)imidazole-4-carboxamide (10-formyl THF route): step 1/1. It participates in purine metabolism; IMP biosynthesis via de novo pathway; IMP from 5-formamido-1-(5-phospho-D-ribosyl)imidazole-4-carboxamide: step 1/1. This chain is Bifunctional purine biosynthesis protein PurH, found in Staphylococcus aureus (strain bovine RF122 / ET3-1).